The following is an 89-amino-acid chain: Small ribosomal subunit protein bS20 (89 aa).

Positions 1–12 (MANIKSAKKRVK) are enriched in basic residues. Residues 1–20 (MANIKSAKKRVKQTVVRNER) are disordered.

This sequence belongs to the bacterial ribosomal protein bS20 family.

In terms of biological role, binds directly to 16S ribosomal RNA. The chain is Small ribosomal subunit protein bS20 from Xylella fastidiosa (strain 9a5c).